The following is a 1050-amino-acid chain: Beta-galactosidase (1050 aa).

Substrate-binding residues include Asn100 and Asp199. A Na(+)-binding site is contributed by Asp199. Mg(2+) contacts are provided by Glu422, His424, and Glu467. Substrate-binding positions include Glu467 and 543–546; that span reads EYAH. Glu467 (proton donor) is an active-site residue. The active-site Nucleophile is the Glu543. Residue Asn603 coordinates Mg(2+). The Na(+) site is built by Phe607 and Asn610. Substrate is bound by residues Asn610 and Trp1025.

Belongs to the glycosyl hydrolase 2 family. As to quaternary structure, homotetramer. It depends on Mg(2+) as a cofactor. The cofactor is Na(+).

The enzyme catalyses Hydrolysis of terminal non-reducing beta-D-galactose residues in beta-D-galactosides.. The sequence is that of Beta-galactosidase from Yersinia pestis bv. Antiqua (strain Angola).